Reading from the N-terminus, the 992-residue chain is Ribosome quality control complex subunit NEMF homolog (992 aa).

The segment covering 214 to 231 (KETTEETPEAEDKPEKGG) has biased composition (basic and acidic residues). Residues 214–245 (KETTEETPEAEDKPEKGGKKQRKKQQNTKLEQ) are disordered. Coiled coils occupy residues 331-370 (STQE…LTKV) and 481-514 (SAAQ…VRTI). Disordered regions lie at residues 688-715 (EVEH…NTEI) and 771-895 (GPSR…GDVD). The span at 702 to 715 (SNINLSEPSSNTEI) shows a compositional bias: polar residues. Residues 774 to 839 (RKKQVSAKKT…QDDEEREIRM (66 aa)) adopt a coiled-coil conformation. Residues 782–796 (KTKEDKARAKQEAAK) are compositionally biased toward basic and acidic residues. Residues 814-825 (RGQKGKLKKMKQ) are compositionally biased toward basic residues. A compositionally biased stretch (basic and acidic residues) spans 845 to 874 (SGKEKPQASADKVVEKSESTKEYVKPEKSA).

Belongs to the NEMF family. As to quaternary structure, component of the ribosome quality control complex (RQC), composed of at least the E3 ubiquitin ligase l(3)76BDr/LTN1 and Clbn/NEMF associated with the 60S ribosomal subunit. The complex probably also contains TCF25 as well as TER94/VCP and its ubiquitin-binding cofactors. Interacts (via its C-terminus) with pros (via its homeobox). Interacts (via its N-terminus) with emb. As to expression, expressed in enterocytes (at protein level).

The protein localises to the nucleus. Its subcellular location is the cytoplasm. The protein resides in the mitochondrion outer membrane. Functionally, key component of the ribosome quality control complex (RQC), a ribosome-associated complex that mediates the extraction of incompletely synthesized nascent chains from stalled ribosomes as well as their ubiquitin-mediated proteasomal degradation. Thereby, frees 60S subunit ribosomes from the stalled translation complex and prevents the accumulation of nascent polypeptide chains that are potentially toxic for the cell. Within the RQC complex, Clbn/NEMF specifically binds stalled 60S ribosomal subunits by recognizing an exposed, nascent chain-conjugated tRNA moiety. Following binding to stalled 60S ribosomal subunits, Clbn/NEMF mediates CAT tailing by recruiting alanine-charged tRNA to the A-site and directing the elongation of stalled nascent chains independently of mRNA or 40S subunits, leading to non-templated C-terminal alanine extensions (CAT tails). On mitochondrial surface, plays a role in mitochondrial-stress induced translational termination impairment and protein carboxyl terminal extension (MISTERMINATE). Plays a role in regulating nuclear transport possibly through directly binding to both emb and cargo proteins. Plays a role in the regulation of G1-to-S cell cycle transition. Regulates S phase checkpoint by antagonizing E2F1 activity. Together with hid and tefu/ATM, plays a role in DNA damage-induced apoptosis through both p53-dependent and -independent activity. Plays an essential role in the regulation of mitochondrial structure and redox state in enterocytes which is essential for the control of intestinal stem cells proliferation and intestinal homeostasis. This is Ribosome quality control complex subunit NEMF homolog from Drosophila melanogaster (Fruit fly).